We begin with the raw amino-acid sequence, 377 residues long: Succinyl-diaminopimelate desuccinylase (377 aa).

His-66 contacts Zn(2+). The active site involves Asp-68. Residue Asp-99 coordinates Zn(2+). Glu-133 serves as the catalytic Proton acceptor. Positions 134, 162, and 348 each coordinate Zn(2+).

Belongs to the peptidase M20A family. DapE subfamily. As to quaternary structure, homodimer. Zn(2+) is required as a cofactor. Requires Co(2+) as cofactor.

The enzyme catalyses N-succinyl-(2S,6S)-2,6-diaminopimelate + H2O = (2S,6S)-2,6-diaminopimelate + succinate. It participates in amino-acid biosynthesis; L-lysine biosynthesis via DAP pathway; LL-2,6-diaminopimelate from (S)-tetrahydrodipicolinate (succinylase route): step 3/3. Catalyzes the hydrolysis of N-succinyl-L,L-diaminopimelic acid (SDAP), forming succinate and LL-2,6-diaminopimelate (DAP), an intermediate involved in the bacterial biosynthesis of lysine and meso-diaminopimelic acid, an essential component of bacterial cell walls. This chain is Succinyl-diaminopimelate desuccinylase, found in Xylella fastidiosa (strain M12).